The primary structure comprises 715 residues: Methionine--tRNA ligase (715 aa).

A 'HIGH' region motif is present at residues 17–27 (PYANGPIHLGH). Cys-148, Cys-151, Cys-161, and Cys-164 together coordinate Zn(2+). Residues 359-363 (KMSKS) carry the 'KMSKS' region motif. An ATP-binding site is contributed by Lys-362. Residues 614 to 715 (DLSKVELRVG…KDAKPGDRLK (102 aa)) form the tRNA-binding domain.

The protein belongs to the class-I aminoacyl-tRNA synthetase family. MetG type 1 subfamily. Homodimer. Zn(2+) is required as a cofactor.

The protein resides in the cytoplasm. It catalyses the reaction tRNA(Met) + L-methionine + ATP = L-methionyl-tRNA(Met) + AMP + diphosphate. Is required not only for elongation of protein synthesis but also for the initiation of all mRNA translation through initiator tRNA(fMet) aminoacylation. The chain is Methionine--tRNA ligase from Leptospira interrogans serogroup Icterohaemorrhagiae serovar copenhageni (strain Fiocruz L1-130).